A 264-amino-acid chain; its full sequence is Rano class II histocompatibility antigen, D-1 beta chain (264 aa).

An N-terminal signal peptide occupies residues 1–26 (MVWLARDSCVAAVILLLTVLSPPVAL). Positions 27 to 120 (VRDPTPRFLE…EISESFLVPR (94 aa)) are beta-1. Over 27-226 (VRDPTPRFLE…AQSTSAQNKK (200 aa)) the chain is Extracellular. Disulfide bonds link cysteine 42/cysteine 106 and cysteine 144/cysteine 200. A glycan (N-linked (GlcNAc...) asparagine) is linked at asparagine 46. The interval 121–215 (TVEPKVTVYP…SLPSPVRVEW (95 aa)) is beta-2. One can recognise an Ig-like C1-type domain in the interval 124–228 (PKVTVYPSKT…STSAQNKKMS (105 aa)). The interval 216-226 (KAQSTSAQNKK) is connecting peptide. A helical membrane pass occupies residues 227–248 (MSGVGGIVLGLLFLGAGLFVYF). The Cytoplasmic portion of the chain corresponds to 249–264 (RNQKGQSGLQPTGLLN).

Belongs to the MHC class II family.

Its subcellular location is the membrane. Its function is as follows. Involved in the presentation of foreign antigens to the immune system. This Rattus norvegicus (Rat) protein is Rano class II histocompatibility antigen, D-1 beta chain (RT1-Db1).